A 91-amino-acid polypeptide reads, in one-letter code: MNELEHFSPEDTRIFGRPFGFGRPFGFGRPFGFGYGFGRPGFGYGFGRPFGFFGGPFIGGLAGGLIGSALFNPYLYGGYPYYPYAPFPFYY.

A helical transmembrane segment spans residues 50–70 (FGFFGGPFIGGLAGGLIGSAL).

It is found in the cell membrane. This is an uncharacterized protein from Bacillus subtilis (strain 168).